The chain runs to 312 residues: Olfactory receptor 10C1 (312 aa).

At 1 to 24 (MSANTSMVTEFLLLGFSHLADLQG) the chain is on the extracellular side. Asparagine 4 carries an N-linked (GlcNAc...) asparagine glycan. A helical membrane pass occupies residues 25-45 (LLFSVFLTIYLLTVAGNFLIV). Over 46–53 (VLVSTDAA) the chain is Cytoplasmic. Residues 54-74 (LQSPMYFFLRTLSALEIGYTS) form a helical membrane-spanning segment. Over 75-98 (VTVPLLLHHLLTGRRHISRSGCAL) the chain is Extracellular. Cysteine 96 and cysteine 188 are disulfide-bonded. The helical transmembrane segment at 99 to 119 (QMFFFLFFGATECCLLAAMAY) threads the bilayer. The Cytoplasmic segment spans residues 120–138 (DRYAAICEPLRYPLLLSHR). Residues 139–159 (VCLQLAGSAWACGVLVGLGHT) traverse the membrane as a helical segment. Topologically, residues 160–196 (PFIFSLPFCGPNTIPQFFCEIQPVLQLVCGDTSLNEL) are extracellular. A helical transmembrane segment spans residues 197–216 (QIILATALLILCPFGLILGS). At 217–236 (YGRILVTIFRIPSVAGRRKA) the chain is on the cytoplasmic side. A helical membrane pass occupies residues 237–257 (FSTCSSHLIMVSLFYGTALFI). The Extracellular portion of the chain corresponds to 258–270 (YIRPKASYDPATD). Residues 271-291 (PLVSLFYAVVTPILNPIIYSL) traverse the membrane as a helical segment. The Cytoplasmic segment spans residues 292–312 (RNTEVKAALKRTIQKTVPMEI).

Belongs to the G-protein coupled receptor 1 family.

The protein localises to the cell membrane. Odorant receptor. In Homo sapiens (Human), this protein is Olfactory receptor 10C1 (OR10C1).